A 186-amino-acid chain; its full sequence is Ribosome-recycling factor (186 aa).

The protein belongs to the RRF family.

Its subcellular location is the cytoplasm. Responsible for the release of ribosomes from messenger RNA at the termination of protein biosynthesis. May increase the efficiency of translation by recycling ribosomes from one round of translation to another. This Pelodictyon phaeoclathratiforme (strain DSM 5477 / BU-1) protein is Ribosome-recycling factor.